The following is a 212-amino-acid chain: Large ribosomal subunit protein uL3 (212 aa).

An N5-methylglutamine modification is found at Gln153.

Belongs to the universal ribosomal protein uL3 family. In terms of assembly, part of the 50S ribosomal subunit. Forms a cluster with proteins L14 and L19. Methylated by PrmB.

In terms of biological role, one of the primary rRNA binding proteins, it binds directly near the 3'-end of the 23S rRNA, where it nucleates assembly of the 50S subunit. This is Large ribosomal subunit protein uL3 from Shewanella woodyi (strain ATCC 51908 / MS32).